The sequence spans 123 residues: MVDLLLIGLGGSIGAILRYTLTKKIGERYQGDWPLATFLINIIGSFGLGLLYGFKLNQVIWLLLGTGFFGGFTTFSTYIYEAIFLMEEGLFWKNVNYLLTSIFTGVVFFAAGMWLANFFKGGV.

4 helical membrane passes run 1–21 (MVDL…RYTL), 34–54 (PLAT…LYGF), 59–79 (VIWL…STYI), and 99–119 (LTSI…ANFF). Residues Gly70 and Thr73 each contribute to the Na(+) site.

The protein belongs to the fluoride channel Fluc/FEX (TC 1.A.43) family.

It is found in the cell membrane. The catalysed reaction is fluoride(in) = fluoride(out). Its activity is regulated as follows. Na(+) is not transported, but it plays an essential structural role and its presence is essential for fluoride channel function. Its function is as follows. Fluoride-specific ion channel. Important for reducing fluoride concentration in the cell, thus reducing its toxicity. The protein is Fluoride-specific ion channel FluC 1 of Carboxydothermus hydrogenoformans (strain ATCC BAA-161 / DSM 6008 / Z-2901).